A 130-amino-acid polypeptide reads, in one-letter code: Protein ApaG (130 aa).

Positions 3–127 constitute an ApaG domain; sequence SAMTRSINIL…FSLDSPHAKR (125 aa).

The chain is Protein ApaG from Parvibaculum lavamentivorans (strain DS-1 / DSM 13023 / NCIMB 13966).